The sequence spans 185 residues: Ribosome-recycling factor (185 aa).

The segment at 136–159 is disordered; it reads NEQLKSQQKDGKMSEDELKRSQDE.

It belongs to the RRF family.

It localises to the cytoplasm. Responsible for the release of ribosomes from messenger RNA at the termination of protein biosynthesis. May increase the efficiency of translation by recycling ribosomes from one round of translation to another. This is Ribosome-recycling factor from Pelotomaculum thermopropionicum (strain DSM 13744 / JCM 10971 / SI).